The sequence spans 1028 residues: RNA cytidine acetyltransferase 2 (1028 aa).

ATP contacts are provided by residues 286–295 (GRGKSAALGL) and Arg-458. The N-acetyltransferase domain maps to 546-729 (VLLGPVDESQ…FAPFYVSQIP (184 aa)). Acetyl-CoA-binding positions include 617–619 (IAV), 624–630 (MKMGYGS), and Lys-717. Residues 982–1028 (SGIISVKSTKSENENGFDKSTKKRSSDKRSSSSSKSKSSKKRKSLKE) are disordered. Basic and acidic residues predominate over residues 990–1001 (TKSENENGFDKS). The segment covering 1018–1028 (KSSKKRKSLKE) has biased composition (basic residues).

Belongs to the RNA cytidine acetyltransferase family. NAT10 subfamily.

The protein resides in the nucleus. It localises to the nucleolus. The enzyme catalyses a cytidine in 18S rRNA + acetyl-CoA + ATP + H2O = an N(4)-acetylcytidine in 18S rRNA + ADP + phosphate + CoA + H(+). The catalysed reaction is a cytidine in tRNA + acetyl-CoA + ATP + H2O = an N(4)-acetylcytidine in tRNA + ADP + phosphate + CoA + H(+). In terms of biological role, RNA cytidine acetyltransferase with specificity toward both 18S rRNA and tRNAs. Catalyzes the formation of N(4)-acetylcytidine (ac4C) in 18S rRNA. Required for early nucleolar cleavages of precursor rRNA at sites A0, A1 and A2 during 18S rRNA synthesis. Catalyzes the formation of ac4C in serine and leucine tRNAs. Requires a tRNA-binding adapter protein for full tRNA acetyltransferase activity but not for 18S rRNA acetylation. The chain is RNA cytidine acetyltransferase 2 from Arabidopsis thaliana (Mouse-ear cress).